The sequence spans 427 residues: Trigger factor (427 aa).

Residues 163-248 enclose the PPIase FKBP-type domain; it reads GDTVVIDFVG…IHEVKTKEVP (86 aa).

Belongs to the FKBP-type PPIase family. Tig subfamily.

It localises to the cytoplasm. The catalysed reaction is [protein]-peptidylproline (omega=180) = [protein]-peptidylproline (omega=0). In terms of biological role, involved in protein export. Acts as a chaperone by maintaining the newly synthesized protein in an open conformation. Functions as a peptidyl-prolyl cis-trans isomerase. The sequence is that of Trigger factor from Streptococcus agalactiae serotype V (strain ATCC BAA-611 / 2603 V/R).